Consider the following 644-residue polypeptide: Threonine--tRNA ligase (644 aa).

The 61-residue stretch at 1-61 (MPVITLPDGS…EKDTKLTIIT (61 aa)) folds into the TGS domain. The segment at 242–535 (DHRRIGADLD…LIEHYEGKFP (294 aa)) is catalytic. Zn(2+) is bound by residues Cys335, His386, and His512.

The protein belongs to the class-II aminoacyl-tRNA synthetase family. In terms of assembly, homodimer. The cofactor is Zn(2+).

Its subcellular location is the cytoplasm. The enzyme catalyses tRNA(Thr) + L-threonine + ATP = L-threonyl-tRNA(Thr) + AMP + diphosphate + H(+). In terms of biological role, catalyzes the attachment of threonine to tRNA(Thr) in a two-step reaction: L-threonine is first activated by ATP to form Thr-AMP and then transferred to the acceptor end of tRNA(Thr). Also edits incorrectly charged L-seryl-tRNA(Thr). The protein is Threonine--tRNA ligase of Nitrosococcus oceani (strain ATCC 19707 / BCRC 17464 / JCM 30415 / NCIMB 11848 / C-107).